The chain runs to 592 residues: Syntaxin-binding protein 3 (592 aa).

Positions Met1 to Gln255 are mediates interaction with DOC2B.

It belongs to the STXBP/unc-18/SEC1 family. As to quaternary structure, interacts with STX4. Interacts with DOC2B; the interaction is direct, occurs at the cell membrane, excludes interaction with STX4 and regulates glucose-stimulated insulin secretion. Post-translationally, phosphorylated by PKC in platelets in response to thrombin stimulation; phosphorylation inhibits binding to STX4. In terms of tissue distribution, ubiquitously expressed in all tissues tested.

Its subcellular location is the cytoplasm. It localises to the cytosol. The protein resides in the cell membrane. Together with STX4 and VAMP2, may play a role in insulin-dependent movement of GLUT4 and in docking/fusion of intracellular GLUT4-containing vesicles with the cell surface in adipocytes. The polypeptide is Syntaxin-binding protein 3 (Stxbp3) (Mus musculus (Mouse)).